Reading from the N-terminus, the 472-residue chain is UDP-glycosyltransferase 100 (472 aa).

Residue His15 is the Proton acceptor of the active site. Residue His15 participates in an anthocyanidin binding. The Charge relay role is filled by Asp117. Residues Ala344, Gln346, His361, Trp364, Asn365, Ser366, and Glu369 each contribute to the UDP-alpha-D-glucose site. Gly384 is a binding site for an anthocyanidin. Positions 385 and 386 each coordinate UDP-alpha-D-glucose.

Belongs to the UDP-glycosyltransferase family.

The catalysed reaction is (20S)-protopanaxadiol + UDP-alpha-D-glucose = (20S)-ginsenoside C-K + UDP + H(+). It catalyses the reaction (20S)-protopanaxatriol + UDP-alpha-D-glucose = (20S)-ginsenoside Rh1 + UDP + H(+). The enzyme catalyses (20S)-ginsenoside F1 + UDP-alpha-D-glucose = (20S)-ginsenoside Rg1 + UDP + H(+). It functions in the pathway secondary metabolite biosynthesis; terpenoid biosynthesis. Component of the dammarane-type triterpene saponins (e.g. PPT-type ginsenosides or panaxosides) biosynthetic pathway. Glycosyltransferase that catalyzes the biosynthesis of ginsenoside Rh1 from protopanaxatriol (PPT) and the conversion of ginsenoside F1 to ginsenoside Rg1. This chain is UDP-glycosyltransferase 100, found in Panax ginseng (Korean ginseng).